The sequence spans 493 residues: Glutamate--tRNA ligase (493 aa).

The short motif at 10-20 is the 'HIGH' region element; that stretch reads PSPTGTPHVGL. The short motif at 254–258 is the 'KMSKS' region element; it reads KLSKR. Lys-257 is a binding site for ATP.

The protein belongs to the class-I aminoacyl-tRNA synthetase family. Glutamate--tRNA ligase type 1 subfamily. As to quaternary structure, monomer.

The protein resides in the cytoplasm. It carries out the reaction tRNA(Glu) + L-glutamate + ATP = L-glutamyl-tRNA(Glu) + AMP + diphosphate. Catalyzes the attachment of glutamate to tRNA(Glu) in a two-step reaction: glutamate is first activated by ATP to form Glu-AMP and then transferred to the acceptor end of tRNA(Glu). The sequence is that of Glutamate--tRNA ligase from Corynebacterium glutamicum (strain ATCC 13032 / DSM 20300 / JCM 1318 / BCRC 11384 / CCUG 27702 / LMG 3730 / NBRC 12168 / NCIMB 10025 / NRRL B-2784 / 534).